The chain runs to 156 residues: Eosinophil cationic-type ribonuclease 3 (156 aa).

An N-terminal signal peptide occupies residues 1 to 25 (MGPKLLESRLCLLLLLRLVLMLASC). Residue histidine 38 is the Proton acceptor of the active site. Residue asparagine 41 is glycosylated (N-linked (GlcNAc...) asparagine). 4 cysteine pairs are disulfide-bonded: cysteine 47/cysteine 106, cysteine 61/cysteine 119, cysteine 79/cysteine 134, and cysteine 86/cysteine 94. 62 to 66 (KGLNT) lines the substrate pocket. 3 N-linked (GlcNAc...) asparagine glycosylation sites follow: asparagine 89, asparagine 96, and asparagine 107. The active-site Proton donor is histidine 151.

Belongs to the pancreatic ribonuclease family.

This Mus musculus (Mouse) protein is Eosinophil cationic-type ribonuclease 3 (Ear3).